The sequence spans 232 residues: Large ribosomal subunit protein uL1 (232 aa).

Belongs to the universal ribosomal protein uL1 family. In terms of assembly, part of the 50S ribosomal subunit.

Functionally, binds directly to 23S rRNA. The L1 stalk is quite mobile in the ribosome, and is involved in E site tRNA release. Protein L1 is also a translational repressor protein, it controls the translation of the L11 operon by binding to its mRNA. The protein is Large ribosomal subunit protein uL1 of Alkaliphilus metalliredigens (strain QYMF).